The chain runs to 132 residues: MLAAFQQQQTRKFSPITNTSASCLNMQPNPPKISIAPSVISVIGVHMEKHKLKIKTGQNIVLSASILPIQATNKELIWSNMNSDIITIYPKGDTVTITGKSAGKAVVIVTTAEGKFRDLCVIHVQPYMTNPK.

The BIG2 domain occupies 45-115 (VHMEKHKLKI…VVIVTTAEGK (71 aa)).

To B.anthracis BA1245.

This is an uncharacterized protein from Bacillus cereus (strain ATCC 14579 / DSM 31 / CCUG 7414 / JCM 2152 / NBRC 15305 / NCIMB 9373 / NCTC 2599 / NRRL B-3711).